The primary structure comprises 81 residues: Sec-independent protein translocase protein TatA (81 aa).

A helical transmembrane segment spans residues 1–21 (MGSLSLWHWIIVGAVLLLLFG). Residues 41–81 (KKGLSEDDEKPEAARPAEPARSLDHQPVAEQPKVSETHRIG) form a disordered region.

It belongs to the TatA/E family. As to quaternary structure, the Tat system comprises two distinct complexes: a TatABC complex, containing multiple copies of TatA, TatB and TatC subunits, and a separate TatA complex, containing only TatA subunits. Substrates initially bind to the TatABC complex, which probably triggers association of the separate TatA complex to form the active translocon.

The protein localises to the cell inner membrane. Part of the twin-arginine translocation (Tat) system that transports large folded proteins containing a characteristic twin-arginine motif in their signal peptide across membranes. TatA could form the protein-conducting channel of the Tat system. The sequence is that of Sec-independent protein translocase protein TatA from Beijerinckia indica subsp. indica (strain ATCC 9039 / DSM 1715 / NCIMB 8712).